A 546-amino-acid polypeptide reads, in one-letter code: Chaperonin GroEL 1 (546 aa).

Residues threonine 30 to proline 33, lysine 51, aspartate 87 to threonine 91, glycine 415, asparagine 479 to alanine 481, and aspartate 495 each bind ATP. The tract at residues lysine 526–methionine 546 is disordered. The span at glycine 534–methionine 546 shows a compositional bias: gly residues.

Belongs to the chaperonin (HSP60) family. In terms of assembly, forms a cylinder of 14 subunits composed of two heptameric rings stacked back-to-back. Interacts with the co-chaperonin GroES.

It localises to the cytoplasm. It catalyses the reaction ATP + H2O + a folded polypeptide = ADP + phosphate + an unfolded polypeptide.. Functionally, together with its co-chaperonin GroES, plays an essential role in assisting protein folding. The GroEL-GroES system forms a nano-cage that allows encapsulation of the non-native substrate proteins and provides a physical environment optimized to promote and accelerate protein folding. The protein is Chaperonin GroEL 1 of Burkholderia ambifaria (strain ATCC BAA-244 / DSM 16087 / CCUG 44356 / LMG 19182 / AMMD) (Burkholderia cepacia (strain AMMD)).